A 252-amino-acid polypeptide reads, in one-letter code: DNA-directed RNA polymerase III subunit rpc8 (252 aa).

The segment at 214 to 252 (WTNQSAGDDDENEEDGGENQDDEVAEDDGGEEPTIEEDE) is disordered. Over residues 220–252 (GDDDENEEDGGENQDDEVAEDDGGEEPTIEEDE) the composition is skewed to acidic residues.

This sequence belongs to the eukaryotic RPB7/RPC8 RNA polymerase subunit family. In terms of assembly, component of the RNA polymerase III (Pol III) complex consisting of several subunits.

It localises to the nucleus. Functionally, DNA-dependent RNA polymerase catalyzes the transcription of DNA into RNA using the four ribonucleoside triphosphates as substrates. The chain is DNA-directed RNA polymerase III subunit rpc8 (polr3h-1) from Dictyostelium discoideum (Social amoeba).